A 166-amino-acid chain; its full sequence is NAD(P)H-quinone oxidoreductase subunit I, chloroplastic (166 aa).

2 4Fe-4S ferredoxin-type domains span residues 55–84 (GRIH…VDWK) and 95–124 (LNYS…MTEE). [4Fe-4S] cluster contacts are provided by Cys-64, Cys-67, Cys-70, Cys-74, Cys-104, Cys-107, Cys-110, and Cys-114.

This sequence belongs to the complex I 23 kDa subunit family. As to quaternary structure, NDH is composed of at least 16 different subunits, 5 of which are encoded in the nucleus. [4Fe-4S] cluster serves as cofactor.

Its subcellular location is the plastid. The protein resides in the chloroplast thylakoid membrane. The catalysed reaction is a plastoquinone + NADH + (n+1) H(+)(in) = a plastoquinol + NAD(+) + n H(+)(out). It catalyses the reaction a plastoquinone + NADPH + (n+1) H(+)(in) = a plastoquinol + NADP(+) + n H(+)(out). NDH shuttles electrons from NAD(P)H:plastoquinone, via FMN and iron-sulfur (Fe-S) centers, to quinones in the photosynthetic chain and possibly in a chloroplast respiratory chain. The immediate electron acceptor for the enzyme in this species is believed to be plastoquinone. Couples the redox reaction to proton translocation, and thus conserves the redox energy in a proton gradient. The sequence is that of NAD(P)H-quinone oxidoreductase subunit I, chloroplastic from Lasianthaea macrocephala (Lipochaeta macrocephala).